The sequence spans 203 residues: Ribosome hibernation promotion factor (203 aa).

This sequence belongs to the HPF/YfiA ribosome-associated protein family. Long HPF subfamily. In terms of assembly, interacts with 100S ribosomes.

The protein localises to the cytoplasm. In terms of biological role, required for dimerization of active 70S ribosomes into 100S ribosomes in stationary phase; 100S ribosomes are translationally inactive and sometimes present during exponential growth. The polypeptide is Ribosome hibernation promotion factor (Bradyrhizobium diazoefficiens (strain JCM 10833 / BCRC 13528 / IAM 13628 / NBRC 14792 / USDA 110)).